Reading from the N-terminus, the 351-residue chain is Translation initiation factor eIF2B subunit beta (351 aa).

It belongs to the eIF-2B alpha/beta/delta subunits family. As to quaternary structure, component of the translation initiation factor 2B (eIF2B) complex which is a heterodecamer of two sets of five different subunits: alpha, beta, gamma, delta and epsilon. Subunits alpha, beta and delta comprise a regulatory subcomplex and subunits epsilon and gamma comprise a catalytic subcomplex. Within the complex, the hexameric regulatory complex resides at the center, with the two heterodimeric catalytic subcomplexes bound on opposite sides.

It localises to the cytoplasm. The protein resides in the cytosol. With respect to regulation, activated by the chemical integrated stress response (ISR) inhibitor ISRIB which stimulates guanine nucleotide exchange factor activity for both phosphorylated and unphosphorylated eIF2. In terms of biological role, acts as a component of the translation initiation factor 2B (eIF2B) complex, which catalyzes the exchange of GDP for GTP on eukaryotic initiation factor 2 (eIF2) gamma subunit. Its guanine nucleotide exchange factor activity is repressed when bound to eIF2 complex phosphorylated on the alpha subunit, thereby limiting the amount of methionyl-initiator methionine tRNA available to the ribosome and consequently global translation is repressed. The polypeptide is Translation initiation factor eIF2B subunit beta (Eif2b2) (Mus musculus (Mouse)).